The chain runs to 184 residues: NADH-quinone oxidoreductase subunit J (184 aa).

Residues 1–21 traverse the membrane as a helical segment; the sequence is MEFAFYICGLIAILATLRVIT. Topologically, residues 22–27 are cytoplasmic; the sequence is HTNPVH. The helical transmembrane segment at 28 to 48 threads the bilayer; that stretch reads ALLYLIISLLAISGVFFSLGA. The Periplasmic segment spans residues 49 to 53; it reads YFAGA. The chain crosses the membrane as a helical span at residues 54–74; sequence LEIIVYAGAIMVLFVFVVMML. The Cytoplasmic segment spans residues 75–91; the sequence is NLGGSEIEQERQWLKPQ. The helical transmembrane segment at 92–112 threads the bilayer; the sequence is VWIGPAILSAIMLVVIVYAIL. The Periplasmic segment spans residues 113-137; it reads GVNDQGIDGTPISAKAVGITLFGPY. A helical membrane pass occupies residues 138–158; sequence VLAVELASMLLLAGLVVAFHV. Residues 159–184 lie on the Cytoplasmic side of the membrane; that stretch reads GREERAGEVLSNRKDDSAKRKTEEHA.

The protein belongs to the complex I subunit 6 family. Composed of 13 different subunits. Subunits NuoA, H, J, K, L, M, N constitute the membrane sector of the complex.

Its subcellular location is the cell inner membrane. It catalyses the reaction a quinone + NADH + 5 H(+)(in) = a quinol + NAD(+) + 4 H(+)(out). Functionally, NDH-1 shuttles electrons from NADH, via FMN and iron-sulfur (Fe-S) centers, to quinones in the respiratory chain. The immediate electron acceptor for the enzyme in this species is believed to be ubiquinone. Couples the redox reaction to proton translocation (for every two electrons transferred, four hydrogen ions are translocated across the cytoplasmic membrane), and thus conserves the redox energy in a proton gradient. This chain is NADH-quinone oxidoreductase subunit J (nuoJ), found in Escherichia coli O157:H7.